A 459-amino-acid polypeptide reads, in one-letter code: tRNA modification GTPase MnmE (459 aa).

(6S)-5-formyl-5,6,7,8-tetrahydrofolate-binding residues include Arg20, Glu85, and Arg124. The TrmE-type G domain maps to 221-380; it reads GISTVIIGRP…LEEAIQSLFF (160 aa). Asn231 is a binding site for K(+). GTP is bound by residues 231–236, 250–256, and 275–278; these read NVGKSS, TDIPGTT, and DTAG. Ser235 lines the Mg(2+) pocket. Thr250, Ile252, and Thr255 together coordinate K(+). Residue Thr256 coordinates Mg(2+). Lys459 contributes to the (6S)-5-formyl-5,6,7,8-tetrahydrofolate binding site.

This sequence belongs to the TRAFAC class TrmE-Era-EngA-EngB-Septin-like GTPase superfamily. TrmE GTPase family. In terms of assembly, homodimer. Heterotetramer of two MnmE and two MnmG subunits. K(+) serves as cofactor.

It localises to the cytoplasm. Its function is as follows. Exhibits a very high intrinsic GTPase hydrolysis rate. Involved in the addition of a carboxymethylaminomethyl (cmnm) group at the wobble position (U34) of certain tRNAs, forming tRNA-cmnm(5)s(2)U34. This chain is tRNA modification GTPase MnmE, found in Bacillus licheniformis (strain ATCC 14580 / DSM 13 / JCM 2505 / CCUG 7422 / NBRC 12200 / NCIMB 9375 / NCTC 10341 / NRRL NRS-1264 / Gibson 46).